We begin with the raw amino-acid sequence, 171 residues long: 3-hydroxydecanoyl-[acyl-carrier-protein] dehydratase (171 aa).

The active site involves His70.

This sequence belongs to the thioester dehydratase family. FabA subfamily. As to quaternary structure, homodimer.

It is found in the cytoplasm. The catalysed reaction is a (3R)-hydroxyacyl-[ACP] = a (2E)-enoyl-[ACP] + H2O. It catalyses the reaction (3R)-hydroxydecanoyl-[ACP] = (2E)-decenoyl-[ACP] + H2O. The enzyme catalyses (2E)-decenoyl-[ACP] = (3Z)-decenoyl-[ACP]. It functions in the pathway lipid metabolism; fatty acid biosynthesis. In terms of biological role, necessary for the introduction of cis unsaturation into fatty acids. Catalyzes the dehydration of (3R)-3-hydroxydecanoyl-ACP to E-(2)-decenoyl-ACP and then its isomerization to Z-(3)-decenoyl-ACP. Can catalyze the dehydratase reaction for beta-hydroxyacyl-ACPs with saturated chain lengths up to 16:0, being most active on intermediate chain length. The chain is 3-hydroxydecanoyl-[acyl-carrier-protein] dehydratase from Shewanella woodyi (strain ATCC 51908 / MS32).